Consider the following 179-residue polypeptide: Large ribosomal subunit protein uL5 (179 aa).

Belongs to the universal ribosomal protein uL5 family. In terms of assembly, part of the 50S ribosomal subunit; part of the 5S rRNA/L5/L18/L25 subcomplex. Contacts the 5S rRNA and the P site tRNA. Forms a bridge to the 30S subunit in the 70S ribosome.

Functionally, this is one of the proteins that bind and probably mediate the attachment of the 5S RNA into the large ribosomal subunit, where it forms part of the central protuberance. In the 70S ribosome it contacts protein S13 of the 30S subunit (bridge B1b), connecting the 2 subunits; this bridge is implicated in subunit movement. Contacts the P site tRNA; the 5S rRNA and some of its associated proteins might help stabilize positioning of ribosome-bound tRNAs. The sequence is that of Large ribosomal subunit protein uL5 from Variovorax paradoxus (strain S110).